Here is a 757-residue protein sequence, read N- to C-terminus: MVGTINESMQNMKIGAKETAQSAKQGIKNAGQSSSKTARDVMGNPVPGSYTAGNTANDGDSSYASSKNLPGNADIGATSSERTAYAAPQRAAVDTSNVSPPSTQTGGYASKDTTSTYEGAQPLSSQSSRSSNYTNVKITATQNNVDALTGAPIRIVTTTNARIQPDEKTLQDLLEQRQVALREAREAEEELQRARQYNDRSTSEALELEARAKKAAQDAELASERAREAQSSIERSASLREKQAREEAERAATALREAELKHRLAQANADVDVANSKLDIALKNEAAWKAERESSLAHQKAVIDSARAELERARHEAAVADATYKKEHYEYNALVAELEERNDNTLRTASIREAEARNLEVHMEDTLKDARMRSRNATEQVEVVKREINSEIDVYRSSVEKTKAELASYQKGLPSQKEACDRELDDATRALQAAFQDRFNAAKLRVNQFDVDSRQQLAMLTKKVRDAEDAEEKYRISCHQREEEITRCATQAYDAVKAAEKRNETIAEAARAKENEAKDLYSKAESITQDLNAKRSHPPQPANLDYSSAIQRAQERLTLEESKLTDLRTAEPSQYVNDVEVARRALRDAQAEQSKVESEYNSVKGSKLYTTEPVHPHAVTTNEPTDVSTKSKSAAYHYPATTETVSSKAARSATTPAYVGGATKTPSTTKAVESTPSTLPTSASTNAAATTTTKKPKAAKSTAVRDDVSSASSDSDKGTTGLGKSESKSSRKERRSSTSSGHGLMNNVRHALGMSNK.

4 stretches are compositionally biased toward polar residues: residues 1 to 11 (MVGTINESMQN), 19 to 36 (TAQSAKQGIKNAGQSSSK), 51 to 69 (TAGNTANDGDSSYASSKNL), and 94 to 118 (DTSNVSPPSTQTGGYASKDTTSTYE). Disordered stretches follow at residues 1–131 (MVGT…SRSS), 224–244 (ERAREAQSSIERSASLREKQA), 589–633 (AQAE…KSKS), and 657–757 (AYVG…MSNK). Residues 166–604 (DEKTLQDLLE…KVESEYNSVK (439 aa)) are a coiled coil. A compositionally biased stretch (basic and acidic residues) spans 589-598 (AQAEQSKVES). Polar residues predominate over residues 619 to 632 (VTTNEPTDVSTKSK). Over residues 674–693 (STPSTLPTSASTNAAATTTT) the composition is skewed to low complexity. 718–725 (GTTGLGKS) provides a ligand contact to ATP.

Its function is as follows. May be involved in the metabolism of very long-chain fatty acid-containing phospholipids (VLCFA-PL). The sequence is that of Protein lsd90 (lsd90) from Schizosaccharomyces pombe (strain 972 / ATCC 24843) (Fission yeast).